The primary structure comprises 490 residues: Limb region 1 protein (490 aa).

The Extracellular portion of the chain corresponds to 1-19 (MEGQDEVSAREQHFHSQVR). The chain crosses the membrane as a helical span at residues 20 to 40 (ESTICFLLFAILYIVSYFIII). The Cytoplasmic segment spans residues 41-62 (RYKRKSDEQEDEDAVVNRISLF). Residues 63 to 83 (LSTFTLAVSAGAVLLLPFSII) form a helical membrane-spanning segment. Topologically, residues 84 to 110 (SNEILLAFPHNYYIQWLNGSLIHGLWN) are extracellular. A helical transmembrane segment spans residues 111–131 (LASLFSNLCLFVLMPFAFFFL). Topologically, residues 132–151 (ESEGFAGLKKGIRARILETL) are cytoplasmic. Residues 152 to 172 (VMLLLLALLILGMVWVASALI) form a helical membrane-spanning segment. Residues 173–187 (DSDAASMESLYDLWE) lie on the Extracellular side of the membrane. A helical membrane pass occupies residues 188–208 (FYLPYLYSCISLMGCLLLLLC). The Cytoplasmic segment spans residues 209–291 (TPVGLSRMFT…RKKASAWERN (83 aa)). Residues 256-287 (SSVEYNVMELEQELENVKILKTKLERRKKASA) adopt a coiled-coil conformation. Residues 292–312 (LVYPAVMVLLLIETSISVLLV) form a helical membrane-spanning segment. The Extracellular segment spans residues 313-339 (ACNILCLLVDETAMPKGTRGPGIGSAS). A helical transmembrane segment spans residues 340–360 (LSTFGFVGAALEIILIFYLMV). The Cytoplasmic segment spans residues 361–383 (SSVVGFYSLRFFGNFTPKKDDTT). A helical membrane pass occupies residues 384-404 (MTKIIGNCVSILVLSSALPVM). At 405–426 (SRTLGITRFDLLGDFGRFNWLG) the chain is on the extracellular side. The helical transmembrane segment at 427-447 (NFYIVLSYNLLFAIMTTLCLI) threads the bilayer. The Cytoplasmic portion of the chain corresponds to 448-490 (RKFTSAVREELFKALGLHKLHLSDTSRDSETTKPSANGHQKAL).

It belongs to the LIMR family.

Its subcellular location is the membrane. Its function is as follows. Putative membrane receptor. This Mus musculus (Mouse) protein is Limb region 1 protein (Lmbr1).